The chain runs to 214 residues: ATP-dependent Clp protease proteolytic subunit (214 aa).

S113 serves as the catalytic Nucleophile. The active site involves H138.

It belongs to the peptidase S14 family. As to quaternary structure, fourteen ClpP subunits assemble into 2 heptameric rings which stack back to back to give a disk-like structure with a central cavity, resembling the structure of eukaryotic proteasomes.

The protein resides in the cytoplasm. It catalyses the reaction Hydrolysis of proteins to small peptides in the presence of ATP and magnesium. alpha-casein is the usual test substrate. In the absence of ATP, only oligopeptides shorter than five residues are hydrolyzed (such as succinyl-Leu-Tyr-|-NHMec, and Leu-Tyr-Leu-|-Tyr-Trp, in which cleavage of the -Tyr-|-Leu- and -Tyr-|-Trp bonds also occurs).. Cleaves peptides in various proteins in a process that requires ATP hydrolysis. Has a chymotrypsin-like activity. Plays a major role in the degradation of misfolded proteins. This chain is ATP-dependent Clp protease proteolytic subunit, found in Teredinibacter turnerae (strain ATCC 39867 / T7901).